The following is a 461-amino-acid chain: UDP-N-acetylmuramate--L-alanine ligase (461 aa).

Position 111–117 (111–117 (GAHGKTT)) interacts with ATP.

This sequence belongs to the MurCDEF family.

It localises to the cytoplasm. The enzyme catalyses UDP-N-acetyl-alpha-D-muramate + L-alanine + ATP = UDP-N-acetyl-alpha-D-muramoyl-L-alanine + ADP + phosphate + H(+). The protein operates within cell wall biogenesis; peptidoglycan biosynthesis. In terms of biological role, cell wall formation. This is UDP-N-acetylmuramate--L-alanine ligase from Pelotomaculum thermopropionicum (strain DSM 13744 / JCM 10971 / SI).